Consider the following 874-residue polypeptide: MKIKNAQLTKAAGLDKLKQKLAQAGSSDTKSSSEKPTTKVPEKVAKEKVVKKKSVLDSSVPTMAEHVSTETSPRRIRAKNRSSFASEDSTIPSPVSVDTESTAFSPPVVEEVVSPLESAEPEIVEPTPASIVDEPETTIQEPPPPKKEAELVVKKEPPKNVVSIKSNFGPTGKHINHLLAKTFKAPKKEDKPAPKERTGTVQTKPQQSSEVPSDKQHSSNNRQSQPFYRRDTSKRPGSDFRDRSKKDDSPKAFTGRDRYGLNDSSDDDKWRKKRVQKTKKHYDEHSVQRPTHIKVPLPITIKDLAAEMKLKASELIQKMFIHGMTYVVNDVLDNETTVQFIGLEFGCTIDIDSSEQDKLCIESNTVKEEIQETDPSQLIIRPPIVAFMGHVDHGKTTLIDSLRKSNVAAVEAGAITQHMGAFCCSTPVGNITILDTPGHEAFSAMRARGAEVCDIVVLVVAGDEGIKEQTLEAVKHARAANITIVVAINKCDKPNFNADTVYRQLSEINLLPEAWGGTTVTINTSAKTGEGLSELLEMLALQAEVLELKANPEARARGIVIESELHKGLGAVATILVQNGTLHLGEALVFNDCYGKVKTMHNEHNQLMTSASPSVPALITGLSSMPKAGDPFVVVKNEKTAKEIVNARIAGQQKFALQKKRPNFDAMLQNKKILKLIIKADVQGSIEALSSSVLKIVSDKVSAEILSSSVGEISESDIRLAAASKAVIIGFHTGIESHAESLIKNLGVKVHLFNIIYHAVDAVKEMMTALLDPIAEERNLGSAEIKETFKSSQLGTIYGCLVSEGVMTRNQKVRVVRNNEVLWKGNLSSLKRIKEDVKEVKKGLECGILLEGYQNAQVGDILQCYEVIYHPQKL.

A disordered region spans residues 1-289; sequence MKIKNAQLTK…KHYDEHSVQR (289 aa). The span at 31-48 shows a compositional bias: basic and acidic residues; the sequence is SSSEKPTTKVPEKVAKEK. Polar residues predominate over residues 81–104; sequence RSSFASEDSTIPSPVSVDTESTAF. The span at 105–118 shows a compositional bias: low complexity; it reads SPPVVEEVVSPLES. 2 stretches are compositionally biased toward basic and acidic residues: residues 144 to 158 and 186 to 198; these read PPKKEAELVVKKEPP and PKKEDKPAPKERT. Residues 199-211 are compositionally biased toward polar residues; that stretch reads GTVQTKPQQSSEV. Basic and acidic residues predominate over residues 228 to 260; the sequence is YRRDTSKRPGSDFRDRSKKDDSPKAFTGRDRYG. Residues 271–280 are compositionally biased toward basic residues; the sequence is RKKRVQKTKK. The 170-residue stretch at 380 to 549 folds into the tr-type G domain; that stretch reads IRPPIVAFMG…ALQAEVLELK (170 aa). The tract at residues 389 to 396 is G1; that stretch reads GHVDHGKT. 389–396 is a binding site for GTP; the sequence is GHVDHGKT. The segment at 414–418 is G2; sequence AITQH. Residues 435–438 are G3; the sequence is DTPG. GTP-binding positions include 435–439 and 489–492; these read DTPGH and NKCD. The interval 489 to 492 is G4; that stretch reads NKCD. A G5 region spans residues 525–527; that stretch reads SAK.

The protein belongs to the TRAFAC class translation factor GTPase superfamily. Classic translation factor GTPase family. IF-2 subfamily.

It localises to the cytoplasm. One of the essential components for the initiation of protein synthesis. Protects formylmethionyl-tRNA from spontaneous hydrolysis and promotes its binding to the 30S ribosomal subunits. Also involved in the hydrolysis of GTP during the formation of the 70S ribosomal complex. The polypeptide is Translation initiation factor IF-2 (Chlamydia abortus (strain DSM 27085 / S26/3) (Chlamydophila abortus)).